We begin with the raw amino-acid sequence, 208 residues long: 3-demethoxyubiquinol 3-hydroxylase (208 aa).

The Fe cation site is built by glutamate 57, glutamate 87, histidine 90, glutamate 139, glutamate 171, and histidine 174.

Belongs to the COQ7 family. Requires Fe cation as cofactor.

Its subcellular location is the cell membrane. It carries out the reaction a 5-methoxy-2-methyl-3-(all-trans-polyprenyl)benzene-1,4-diol + AH2 + O2 = a 3-demethylubiquinol + A + H2O. It participates in cofactor biosynthesis; ubiquinone biosynthesis. Catalyzes the hydroxylation of 2-nonaprenyl-3-methyl-6-methoxy-1,4-benzoquinol during ubiquinone biosynthesis. The chain is 3-demethoxyubiquinol 3-hydroxylase from Herbaspirillum seropedicae.